Here is a 919-residue protein sequence, read N- to C-terminus: UPF0182 protein SUN_1015 (919 aa).

7 helical membrane-spanning segments follow: residues 8 to 28, 51 to 71, 102 to 122, 158 to 178, 207 to 227, 246 to 266, and 274 to 294; these read IIIT…VDYY, ILSF…HIHF, AVAW…GSYA, VYQF…IGVL, LTAF…YNIL, IPAY…LFFY, and VIVS…WIYP.

The protein belongs to the UPF0182 family.

It localises to the cell membrane. This Sulfurovum sp. (strain NBC37-1) protein is UPF0182 protein SUN_1015.